The following is a 388-amino-acid chain: Gastricsin (388 aa).

An N-terminal signal peptide occupies residues 1–16 (MKWLLVALVCLHLLEA). A propeptide spans 17–59 (AVIKVPLRKFKSIRETLKEKGLLKEFLNTHKYDPALKYRFGDF) (activation peptide). The region spanning 73–385 (YFGEISIGTP…DMANNRVGFA (313 aa)) is the Peptidase A1 domain. Residue D91 is part of the active site. Disulfide bonds link C104-C109 and C267-C271. Residue D276 is part of the active site. C310 and C343 are disulfide-bonded.

It belongs to the peptidase A1 family.

It is found in the secreted. The catalysed reaction is More restricted specificity than pepsin A, but shows preferential cleavage at Tyr-|-Xaa bonds. High activity on hemoglobin.. Functionally, hydrolyzes a variety of proteins. The polypeptide is Gastricsin (PGC) (Oryctolagus cuniculus (Rabbit)).